The sequence spans 321 residues: Glucokinase (321 aa).

Residue 8–13 coordinates ATP; it reads GDVGGT.

The protein belongs to the bacterial glucokinase family.

The protein resides in the cytoplasm. It catalyses the reaction D-glucose + ATP = D-glucose 6-phosphate + ADP + H(+). The sequence is that of Glucokinase from Escherichia coli (strain SMS-3-5 / SECEC).